The primary structure comprises 303 residues: Ribonuclease Z (303 aa).

Residues His61, His63, Asp65, His66, His139, Asp207, and His266 each coordinate Zn(2+). Residue Asp65 is the Proton acceptor of the active site.

This sequence belongs to the RNase Z family. In terms of assembly, homodimer. The cofactor is Zn(2+).

It carries out the reaction Endonucleolytic cleavage of RNA, removing extra 3' nucleotides from tRNA precursor, generating 3' termini of tRNAs. A 3'-hydroxy group is left at the tRNA terminus and a 5'-phosphoryl group is left at the trailer molecule.. In terms of biological role, zinc phosphodiesterase, which displays some tRNA 3'-processing endonuclease activity. Probably involved in tRNA maturation, by removing a 3'-trailer from precursor tRNA. The polypeptide is Ribonuclease Z (Clostridium kluyveri (strain ATCC 8527 / DSM 555 / NBRC 12016 / NCIMB 10680 / K1)).